Reading from the N-terminus, the 312-residue chain is Glyoxylate/hydroxypyruvate reductase A (312 aa).

R227 is an active-site residue. Catalysis depends on H275, which acts as the Proton donor.

The protein belongs to the D-isomer specific 2-hydroxyacid dehydrogenase family. GhrA subfamily.

The protein resides in the cytoplasm. It carries out the reaction glycolate + NADP(+) = glyoxylate + NADPH + H(+). The enzyme catalyses (R)-glycerate + NAD(+) = 3-hydroxypyruvate + NADH + H(+). The catalysed reaction is (R)-glycerate + NADP(+) = 3-hydroxypyruvate + NADPH + H(+). Functionally, catalyzes the NADPH-dependent reduction of glyoxylate and hydroxypyruvate into glycolate and glycerate, respectively. The polypeptide is Glyoxylate/hydroxypyruvate reductase A (Salmonella heidelberg (strain SL476)).